The sequence spans 101 residues: NAD(P)H-quinone oxidoreductase subunit 4L, chloroplastic (101 aa).

Transmembrane regions (helical) follow at residues Met-2–Ile-22, Met-32–Phe-52, and Ile-61–Val-81.

This sequence belongs to the complex I subunit 4L family. In terms of assembly, NDH is composed of at least 16 different subunits, 5 of which are encoded in the nucleus.

The protein localises to the plastid. It localises to the chloroplast thylakoid membrane. The enzyme catalyses a plastoquinone + NADH + (n+1) H(+)(in) = a plastoquinol + NAD(+) + n H(+)(out). The catalysed reaction is a plastoquinone + NADPH + (n+1) H(+)(in) = a plastoquinol + NADP(+) + n H(+)(out). In terms of biological role, NDH shuttles electrons from NAD(P)H:plastoquinone, via FMN and iron-sulfur (Fe-S) centers, to quinones in the photosynthetic chain and possibly in a chloroplast respiratory chain. The immediate electron acceptor for the enzyme in this species is believed to be plastoquinone. Couples the redox reaction to proton translocation, and thus conserves the redox energy in a proton gradient. This Liriodendron tulipifera (Tuliptree) protein is NAD(P)H-quinone oxidoreductase subunit 4L, chloroplastic.